The primary structure comprises 493 residues: Galactose-1-phosphate uridylyltransferase (493 aa).

This sequence belongs to the galactose-1-phosphate uridylyltransferase type 2 family.

Its subcellular location is the cytoplasm. It catalyses the reaction alpha-D-galactose 1-phosphate + UDP-alpha-D-glucose = alpha-D-glucose 1-phosphate + UDP-alpha-D-galactose. It participates in carbohydrate metabolism; galactose metabolism. In Lactococcus lactis subsp. cremoris (strain MG1363), this protein is Galactose-1-phosphate uridylyltransferase.